We begin with the raw amino-acid sequence, 427 residues long: Tryptophan synthase beta chain 1 (427 aa).

An N6-(pyridoxal phosphate)lysine modification is found at lysine 107.

It belongs to the TrpB family. As to quaternary structure, tetramer of two alpha and two beta chains. Pyridoxal 5'-phosphate serves as cofactor.

The enzyme catalyses (1S,2R)-1-C-(indol-3-yl)glycerol 3-phosphate + L-serine = D-glyceraldehyde 3-phosphate + L-tryptophan + H2O. It functions in the pathway amino-acid biosynthesis; L-tryptophan biosynthesis; L-tryptophan from chorismate: step 5/5. Its function is as follows. The beta subunit is responsible for the synthesis of L-tryptophan from indole and L-serine. The protein is Tryptophan synthase beta chain 1 (trpB1) of Aeropyrum pernix (strain ATCC 700893 / DSM 11879 / JCM 9820 / NBRC 100138 / K1).